A 491-amino-acid chain; its full sequence is UDP-N-acetylmuramate--L-alanine ligase (491 aa).

Residue 126–132 (GTHGKTT) coordinates ATP.

Belongs to the MurCDEF family.

It is found in the cytoplasm. It carries out the reaction UDP-N-acetyl-alpha-D-muramate + L-alanine + ATP = UDP-N-acetyl-alpha-D-muramoyl-L-alanine + ADP + phosphate + H(+). The protein operates within cell wall biogenesis; peptidoglycan biosynthesis. In terms of biological role, cell wall formation. This chain is UDP-N-acetylmuramate--L-alanine ligase, found in Salmonella agona (strain SL483).